A 99-amino-acid chain; its full sequence is UPF0213 protein spr1390 (99 aa).

Residues 3 to 78 enclose the GIY-YIG domain; sequence HKAYMYVLEC…KRKKRPQKEE (76 aa).

This sequence belongs to the UPF0213 family.

This is UPF0213 protein spr1390 from Streptococcus pneumoniae (strain ATCC BAA-255 / R6).